The sequence spans 429 residues: Endoglucanase type C (429 aa).

A signal peptide spans 1–18 (MKSLSLILSALAVQVAVA). Glutamine 19 is subject to Pyrrolidone carboxylic acid. 9 disulfides stabilise this stretch: cysteine 36/cysteine 42, cysteine 66/cysteine 88, cysteine 78/cysteine 84, cysteine 156/cysteine 383, cysteine 190/cysteine 213, cysteine 194/cysteine 212, cysteine 233/cysteine 252, cysteine 241/cysteine 246, and cysteine 257/cysteine 333. Asparagine 74 is a glycosylation site (N-linked (GlcNAc...) asparagine). Glutamate 215 serves as the catalytic Nucleophile. Residue glutamate 220 is the Proton donor of the active site. N-linked (GlcNAc...) asparagine glycans are attached at residues asparagine 265 and asparagine 318.

Belongs to the glycosyl hydrolase 7 (cellulase C) family.

It carries out the reaction Endohydrolysis of (1-&gt;4)-beta-D-glucosidic linkages in cellulose, lichenin and cereal beta-D-glucans.. This chain is Endoglucanase type C, found in Fusarium oxysporum (Fusarium vascular wilt).